We begin with the raw amino-acid sequence, 338 residues long: Glycerol-3-phosphate dehydrogenase [NAD(P)+] (338 aa).

3 residues coordinate NADPH: Ser-13, Trp-14, and Lys-108. Sn-glycerol 3-phosphate contacts are provided by Lys-108, Gly-139, and Ser-141. Position 143 (Ala-143) interacts with NADPH. Sn-glycerol 3-phosphate-binding residues include Lys-194, Asp-247, Ser-257, Arg-258, and Asn-259. Lys-194 serves as the catalytic Proton acceptor. Arg-258 serves as a coordination point for NADPH. NADPH is bound by residues Val-282 and Glu-284.

The protein localises to the cytoplasm. The enzyme catalyses sn-glycerol 3-phosphate + NAD(+) = dihydroxyacetone phosphate + NADH + H(+). The catalysed reaction is sn-glycerol 3-phosphate + NADP(+) = dihydroxyacetone phosphate + NADPH + H(+). It functions in the pathway membrane lipid metabolism; glycerophospholipid metabolism. Catalyzes the reduction of the glycolytic intermediate dihydroxyacetone phosphate (DHAP) to sn-glycerol 3-phosphate (G3P), the key precursor for phospholipid synthesis. The chain is Glycerol-3-phosphate dehydrogenase [NAD(P)+] from Streptococcus pyogenes serotype M6 (strain ATCC BAA-946 / MGAS10394).